Consider the following 404-residue polypeptide: Cytochrome b561 and DOMON domain-containing protein At2g04850 (404 aa).

Residues 1–22 (MATLILSFLLLLLATKLPESLA) form the signal peptide. Positions 43–173 (QQASIAWTYH…TKIHHVWNRG (131 aa)) constitute a DOMON domain. Residues 180-380 (SPTIHPTTST…MEVNSWVVFC (201 aa)) enclose the Cytochrome b561 domain. A helical membrane pass occupies residues 217-237 (VTHGVVNAISWGFLLPAGAVT). Heme b-binding residues include histidine 219 and histidine 255. The helical transmembrane segment at 256 to 276 (AAIQLTGFLLGTIGFSIGIVL) threads the bilayer. Histidine 288 serves as a coordination point for heme b. The helical transmembrane segment at 290 to 310 (SLGIATFTAAALQTLALLFRP) threads the bilayer. Heme b is bound at residue histidine 324. The next 2 helical transmembrane spans lie at 326–346 (FVGYACVVMGVVNVFQGFEVL) and 359–379 (LCLSTLVGVCVAMEVNSWVVF).

The cofactor is heme b.

The protein localises to the membrane. In terms of biological role, may act as a catecholamine-responsive trans-membrane electron transporter. This chain is Cytochrome b561 and DOMON domain-containing protein At2g04850, found in Arabidopsis thaliana (Mouse-ear cress).